A 211-amino-acid polypeptide reads, in one-letter code: B3 domain-containing protein At5g42700 (211 aa).

A DNA-binding region (TF-B3) is located at residues 110–201 (FVKSMLQSHV…AFKVYITRVG (92 aa)).

It localises to the nucleus. The sequence is that of B3 domain-containing protein At5g42700 from Arabidopsis thaliana (Mouse-ear cress).